Here is a 173-residue protein sequence, read N- to C-terminus: ATP synthase subunit beta, mitochondrial (173 aa).

This sequence belongs to the ATPase alpha/beta chains family. F-type ATPases have 2 components, CF(1) - the catalytic core - and CF(0) - the membrane proton channel. CF(1) has five subunits: alpha(3), beta(3), gamma(1), delta(1), epsilon(1). CF(0) has three main subunits: a, b and c.

It is found in the mitochondrion. The protein localises to the mitochondrion inner membrane. It carries out the reaction ATP + H2O + 4 H(+)(in) = ADP + phosphate + 5 H(+)(out). Its function is as follows. Mitochondrial membrane ATP synthase (F(1)F(0) ATP synthase or Complex V) produces ATP from ADP in the presence of a proton gradient across the membrane which is generated by electron transport complexes of the respiratory chain. F-type ATPases consist of two structural domains, F(1) - containing the extramembraneous catalytic core and F(0) - containing the membrane proton channel, linked together by a central stalk and a peripheral stalk. During catalysis, ATP synthesis in the catalytic domain of F(1) is coupled via a rotary mechanism of the central stalk subunits to proton translocation. Subunits alpha and beta form the catalytic core in F(1). Rotation of the central stalk against the surrounding alpha(3)beta(3) subunits leads to hydrolysis of ATP in three separate catalytic sites on the beta subunits. This is ATP synthase subunit beta, mitochondrial (ATPB) from Actinidia deliciosa (Kiwi).